Reading from the N-terminus, the 424-residue chain is MASSNLIKQLQERGLVAQVTDEDALAERLAQGPIALYCGFDPTADSLHLGHLVPLLCLKRFQQAGHKPVALVGGATGLIGDPSFKAAERKLNTEETVQEWVAKIRKQVAPFLDFDCGENSAIAANNYDWFGSMNVLTFLRDIGKHFSVNQMINKEAVKQRLNRDDQGISFTEFSYNLLQGYDFACLNKLHGVALQIGGSDQWGNITSGIDLTRRLHQNQVFGLTVPLITKADGTKFGKTEGGAVWLDPKKTSPYKFYQFWINTADADVYRFLKFFTFMDIEEINALEEEDKNSGKAPRAQYVLAEQVTRLVHGEEGLVAAKRITECLFSGSLSALSEADFEQLAQDGVPMVEMEKGADLMQALVDAELQPSRGQARKTIASNAVTINGEKQSDPEYIFNDEDRLFGRYTLLRRGKKNYCLICWK.

Residue Y37 participates in L-tyrosine binding. Positions 42–51 (PTADSLHLGH) match the 'HIGH' region motif. L-tyrosine is bound by residues Y175 and Q179. The 'KMSKS' region motif lies at 235-239 (KFGKT). K238 contributes to the ATP binding site. The region spanning 357–414 (ADLMQALVDAELQPSRGQARKTIASNAVTINGEKQSDPEYIFNDEDRLFGRYTLLRRG) is the S4 RNA-binding domain.

It belongs to the class-I aminoacyl-tRNA synthetase family. TyrS type 1 subfamily. Homodimer.

The protein resides in the cytoplasm. The catalysed reaction is tRNA(Tyr) + L-tyrosine + ATP = L-tyrosyl-tRNA(Tyr) + AMP + diphosphate + H(+). Functionally, catalyzes the attachment of tyrosine to tRNA(Tyr) in a two-step reaction: tyrosine is first activated by ATP to form Tyr-AMP and then transferred to the acceptor end of tRNA(Tyr). In Salmonella agona (strain SL483), this protein is Tyrosine--tRNA ligase.